We begin with the raw amino-acid sequence, 456 residues long: Outer membrane protein assembly factor BamB (456 aa).

An N-terminal signal peptide occupies residues 1–19 (MKKLLFITAPLLLSVLTAS). Cysteine 20 carries N-palmitoyl cysteine lipidation. A lipid anchor (S-diacylglycerol cysteine) is attached at cysteine 20.

This sequence belongs to the BamB family. As to quaternary structure, part of the Bam complex.

It localises to the cell outer membrane. Part of the outer membrane protein assembly complex, which is involved in assembly and insertion of beta-barrel proteins into the outer membrane. The polypeptide is Outer membrane protein assembly factor BamB (Francisella tularensis subsp. tularensis (strain SCHU S4 / Schu 4)).